Consider the following 53-residue polypeptide: Small ribosomal subunit protein uS14 (53 aa).

Positions 17, 20, 36, and 39 each coordinate Zn(2+).

Belongs to the universal ribosomal protein uS14 family. Zinc-binding uS14 subfamily. Part of the 30S ribosomal subunit. The cofactor is Zn(2+).

Binds 16S rRNA, required for the assembly of 30S particles. The chain is Small ribosomal subunit protein uS14 from Methanocaldococcus jannaschii (strain ATCC 43067 / DSM 2661 / JAL-1 / JCM 10045 / NBRC 100440) (Methanococcus jannaschii).